The following is a 482-amino-acid chain: G patch domain-containing protein 2-like (482 aa).

Phosphoserine is present on residues serine 31, serine 86, and serine 88. The residue at position 91 (threonine 91) is a Phosphothreonine. Residue lysine 196 forms a Glycyl lysine isopeptide (Lys-Gly) (interchain with G-Cter in SUMO2) linkage. Residues 198 to 214 (GRKERMECETDEQKQGS) are compositionally biased toward basic and acidic residues. Disordered regions lie at residues 198 to 247 (GRKE…DDEQ) and 413 to 482 (KRKR…PGYS). Over residues 220 to 230 (ECETSSVCSSS) the composition is skewed to low complexity. Residues 439-450 (TPASQAPKSPSS) show a composition bias toward polar residues. Phosphoserine occurs at positions 447 and 449. The span at 456–469 (TSAAEKATDATTAT) shows a compositional bias: low complexity.

The polypeptide is G patch domain-containing protein 2-like (GPATCH2L) (Homo sapiens (Human)).